A 143-amino-acid polypeptide reads, in one-letter code: Transcriptional regulator MraZ (143 aa).

2 consecutive SpoVT-AbrB domains span residues 5–47 (EYQH…PKDE) and 76–119 (AIES…SKDN).

This sequence belongs to the MraZ family. Forms oligomers.

The protein resides in the cytoplasm. The protein localises to the nucleoid. In Oenococcus oeni (strain ATCC BAA-331 / PSU-1), this protein is Transcriptional regulator MraZ.